The following is a 422-amino-acid chain: UDP-N-acetylglucosamine 1-carboxyvinyltransferase (422 aa).

22-23 (KN) lines the phosphoenolpyruvate pocket. Position 93 (Arg-93) interacts with UDP-N-acetyl-alpha-D-glucosamine. Cys-117 (proton donor) is an active-site residue. Cys-117 carries the post-translational modification 2-(S-cysteinyl)pyruvic acid O-phosphothioketal. UDP-N-acetyl-alpha-D-glucosamine is bound by residues 122 to 126 (RPVDL), Asp-308, and Leu-330.

The protein belongs to the EPSP synthase family. MurA subfamily.

It is found in the cytoplasm. It carries out the reaction phosphoenolpyruvate + UDP-N-acetyl-alpha-D-glucosamine = UDP-N-acetyl-3-O-(1-carboxyvinyl)-alpha-D-glucosamine + phosphate. It participates in cell wall biogenesis; peptidoglycan biosynthesis. Cell wall formation. Adds enolpyruvyl to UDP-N-acetylglucosamine. The chain is UDP-N-acetylglucosamine 1-carboxyvinyltransferase from Helicobacter pylori (strain P12).